A 946-amino-acid polypeptide reads, in one-letter code: Probable inactive ATP-dependent zinc metalloprotease FTSHI 1, chloroplastic (946 aa).

Residues 1–54 (MASIDNVFSLGTRFSIPENPKRSILKHATTSSFSARTQTRWRAPILRRSFTVLC) constitute a chloroplast transit peptide. 3 consecutive transmembrane segments (helical) span residues 289 to 309 (AVIA…VFAV), 320 to 340 (VVWP…LGVL), and 369 to 389 (VASS…MVLL). Position 470-477 (470-477 (GPPGCGKT)) interacts with ATP.

This sequence in the N-terminal section; belongs to the AAA ATPase family. In the C-terminal section; belongs to the peptidase M41 family. Oligomer.

The protein localises to the plastid. It is found in the chloroplast inner membrane. Functions in chloroplast biogenesis and chloroplast division. Required for plastid development during embryogenesis. Might be involved in chaperone functions or play a structural role in the thylakoid FtsH complex. The polypeptide is Probable inactive ATP-dependent zinc metalloprotease FTSHI 1, chloroplastic (Arabidopsis thaliana (Mouse-ear cress)).